We begin with the raw amino-acid sequence, 970 residues long: Sodium/calcium exchanger 1 (970 aa).

An N-terminal signal peptide occupies residues 1–32; it reads MLQLRLLPTFSMGCHLLAVVALLFSHVDLISA. Over 33–71 the chain is Extracellular; sequence ETEMEGEGNETGECTGSYYCKKGVILPIWEPQDPSFGDK. A glycan (N-linked (GlcNAc...) asparagine) is linked at N41. The helical transmembrane segment at 72–92 threads the bilayer; the sequence is IARATVYFVAMVYMFLGVSII. Over 93-133 the chain is Cytoplasmic; it reads ADRFMSSIEVITSQEKEITIKKPNGETTKTTVRIWNETVSN. The chain crosses the membrane as a helical span at residues 134-154; that stretch reads LTLMALGSSAPEILLSVIEVC. One copy of the Alpha-1 repeat lies at 138 to 178; it reads ALGSSAPEILLSVIEVCGHNFTAGDLGPSTIVGSAAFNMFI. Residues 155–167 lie on the Extracellular side of the membrane; that stretch reads GHNFTAGDLGPST. An N-linked (GlcNAc...) asparagine glycan is attached at N157. A helical membrane pass occupies residues 168–188; sequence IVGSAAFNMFIIIALCVYVVP. The Cytoplasmic portion of the chain corresponds to 189–201; it reads DGETRKIKHLRVF. Residues 202 to 222 form a helical membrane-spanning segment; sequence FVTAAWSIFAYTWLYIILSVI. The Extracellular portion of the chain corresponds to 223 to 228; that stretch reads SPGVVE. The chain crosses the membrane as a helical span at residues 229-249; the sequence is VWEGLLTFFFFPICVVFAWVA. The Cytoplasmic portion of the chain corresponds to 250–797; it reads DRRLLFYKYV…FVPPTEYWNG (548 aa). The putative calmodulin-binding region stretch occupies residues 251–270; sequence RRLLFYKYVYKRYRAGKQRG. Phosphoserine occurs at positions 282 and 389. Calx-beta domains follow at residues 393–493 and 524–624; these read VNTE…VHLS and ATVT…LEIG. Ca(2+) contacts are provided by E417, D453, D478, D479, I481, E483, E486, D530, D531, D532, E548, D584, D610, E611, E612, and E715. The helical transmembrane segment at 798-818 threads the bilayer; the sequence is WACFIVSILMIGILTAFIGDL. Topologically, residues 819-821 are extracellular; it reads ASH. The helical transmembrane segment at 822–842 threads the bilayer; sequence FGCTIGLKDSVTAVVFVALGT. One copy of the Alpha-2 repeat lies at 839 to 875; sequence ALGTSVPDTFASKVAATQDQYADASIGNVTGSNAVNV. The Cytoplasmic segment spans residues 843–871; the sequence is SVPDTFASKVAATQDQYADASIGNVTGSN. The chain crosses the membrane as a helical span at residues 872 to 892; the sequence is AVNVFLGIGVAWSIAAIYHAA. At 893–903 the chain is on the extracellular side; sequence NGEQFKVSPGT. The chain crosses the membrane as a helical span at residues 904-924; it reads LAFSVTLFTIFAFINVGVLLY. Residues 925–941 are Cytoplasmic-facing; that stretch reads RRRPEIGGELGGPRTAK. A helical transmembrane segment spans residues 942–962; the sequence is LLTSCLFVLLWLLYIFFSSLE. The Extracellular segment spans residues 963–970; it reads AYCHIKGF.

Belongs to the Ca(2+):cation antiporter (CaCA) (TC 2.A.19) family. SLC8 subfamily. In terms of tissue distribution, cardiac sarcolemma (at protein level).

It localises to the cell membrane. Its subcellular location is the sarcolemma. The enzyme catalyses Ca(2+)(in) + 3 Na(+)(out) = Ca(2+)(out) + 3 Na(+)(in). With respect to regulation, activated by micromolar levels of Ca(2+). In the absence of regulatory Ca(2+), channels open rapidly, and then inactivate rapidly. Inactivation is enhanced by Na(+) and is inhibited by micromolar levels of Ca(2+). Its function is as follows. Mediates the exchange of one Ca(2+) ion against three to four Na(+) ions across the cell membrane, and thereby contributes to the regulation of cytoplasmic Ca(2+) levels and Ca(2+)-dependent cellular processes. Contributes to Ca(2+) transport during excitation-contraction coupling in muscle. In a first phase, voltage-gated channels mediate the rapid increase of cytoplasmic Ca(2+) levels due to release of Ca(2+) stores from the endoplasmic reticulum. SLC8A1 mediates the export of Ca(2+) from the cell during the next phase, so that cytoplasmic Ca(2+) levels rapidly return to baseline. Required for normal embryonic heart development and the onset of heart contractions. This Canis lupus familiaris (Dog) protein is Sodium/calcium exchanger 1 (SLC8A1).